The sequence spans 275 residues: Diaminopimelate epimerase (275 aa).

3 residues coordinate substrate: Asn13, Gln46, and Asn65. Cys74 (proton donor) is an active-site residue. Substrate is bound by residues Gly75–Asn76, Asn158, Asn191, and Glu209–Arg210. Cys218 acts as the Proton acceptor in catalysis. Gly219–Thr220 is a binding site for substrate.

Belongs to the diaminopimelate epimerase family. As to quaternary structure, homodimer.

The protein resides in the cytoplasm. It catalyses the reaction (2S,6S)-2,6-diaminopimelate = meso-2,6-diaminopimelate. The protein operates within amino-acid biosynthesis; L-lysine biosynthesis via DAP pathway; DL-2,6-diaminopimelate from LL-2,6-diaminopimelate: step 1/1. Functionally, catalyzes the stereoinversion of LL-2,6-diaminopimelate (L,L-DAP) to meso-diaminopimelate (meso-DAP), a precursor of L-lysine and an essential component of the bacterial peptidoglycan. This is Diaminopimelate epimerase from Nitrosomonas europaea (strain ATCC 19718 / CIP 103999 / KCTC 2705 / NBRC 14298).